The chain runs to 340 residues: GTPase Obg (340 aa).

The Obg domain maps to 1-158; the sequence is MSFIDEAKVY…KWIILKLKII (158 aa). An OBG-type G domain is found at 159 to 325; the sequence is SDVGIIGLPN…LSILIKHINK (167 aa). GTP-binding positions include 165 to 172, 190 to 194, 211 to 214, 278 to 281, and 306 to 308; these read GLPNAGKS, FTTLE, DIPG, NKCD, and SSI. Residues Ser-172 and Thr-192 each contribute to the Mg(2+) site.

Belongs to the TRAFAC class OBG-HflX-like GTPase superfamily. OBG GTPase family. Monomer. Requires Mg(2+) as cofactor.

Its subcellular location is the cytoplasm. Its function is as follows. An essential GTPase which binds GTP, GDP and possibly (p)ppGpp with moderate affinity, with high nucleotide exchange rates and a fairly low GTP hydrolysis rate. Plays a role in control of the cell cycle, stress response, ribosome biogenesis and in those bacteria that undergo differentiation, in morphogenesis control. This chain is GTPase Obg, found in Ehrlichia ruminantium (strain Gardel).